A 208-amino-acid polypeptide reads, in one-letter code: Orotidine 5'-phosphate decarboxylase (208 aa).

Substrate-binding positions include Asp7, Lys29, 57 to 66, Ser109, 162 to 172, Gly185, and Arg186; these read DLKLADIPNT and PGIGAQGGKAK. Lys59 (proton donor) is an active-site residue.

It belongs to the OMP decarboxylase family. Type 1 subfamily. In terms of assembly, homodimer.

The catalysed reaction is orotidine 5'-phosphate + H(+) = UMP + CO2. It functions in the pathway pyrimidine metabolism; UMP biosynthesis via de novo pathway; UMP from orotate: step 2/2. Catalyzes the decarboxylation of orotidine 5'-monophosphate (OMP) to uridine 5'-monophosphate (UMP). The chain is Orotidine 5'-phosphate decarboxylase (pyrF) from Pyrococcus horikoshii (strain ATCC 700860 / DSM 12428 / JCM 9974 / NBRC 100139 / OT-3).